A 441-amino-acid polypeptide reads, in one-letter code: Maltose-6'-phosphate glucosidase (441 aa).

4 to 70 (FSILIAGGGS…PQIKFSYSTN (67 aa)) is an NAD(+) binding site. Residues arginine 93 and asparagine 147 each coordinate substrate. Mn(2+) is bound at residue cysteine 169. Aspartate 170 acts as the Proton donor in catalysis. Histidine 200 provides a ligand contact to Mn(2+). Residue tyrosine 264 is the Proton acceptor of the active site. A substrate-binding site is contributed by arginine 284.

It belongs to the glycosyl hydrolase 4 family. Homotetramer. The cofactor is NAD(+). Requires Mn(2+) as cofactor. It depends on Fe(2+) as a cofactor. Co(2+) is required as a cofactor. Ni(2+) serves as cofactor.

It catalyses the reaction alpha-maltose 6'-phosphate + H2O = D-glucose 6-phosphate + D-glucose. The protein operates within glycan degradation; maltose degradation. In terms of biological role, hydrolyzes a wide variety of 6-phospho-alpha-D-glucosides including maltose-6'P, trehalose-6P and the 6'-phosphorylated derivatives of the five linkage-isomeric alpha-D-glucosyl-D-fructoses: trehalulose-6'P, turanose-6'P, maltulose-6'P, leucrose-6'P, and palatinose-6'P. However, sucrose-6P is not a substrate for MalH, and this enzyme also fails to hydrolyze beta-O-linked phosphorylated disaccharides such as cellobiose-6'P and gentobiose-6'P. The chain is Maltose-6'-phosphate glucosidase (malH) from Fusobacterium mortiferum.